A 291-amino-acid chain; its full sequence is Diaminopimelate epimerase (291 aa).

Substrate is bound by residues Asn11 and Asn78. The active-site Proton donor is the Cys87. Substrate-binding positions include 88-89 (GN), Asn166, Asn200, and 218-219 (ER). Cys227 acts as the Proton acceptor in catalysis. 228 to 229 (GT) provides a ligand contact to substrate.

Belongs to the diaminopimelate epimerase family. In terms of assembly, homodimer.

It localises to the cytoplasm. It catalyses the reaction (2S,6S)-2,6-diaminopimelate = meso-2,6-diaminopimelate. Its pathway is amino-acid biosynthesis; L-lysine biosynthesis via DAP pathway; DL-2,6-diaminopimelate from LL-2,6-diaminopimelate: step 1/1. In terms of biological role, catalyzes the stereoinversion of LL-2,6-diaminopimelate (L,L-DAP) to meso-diaminopimelate (meso-DAP), a precursor of L-lysine and an essential component of the bacterial peptidoglycan. The polypeptide is Diaminopimelate epimerase (Mycolicibacterium smegmatis (strain ATCC 700084 / mc(2)155) (Mycobacterium smegmatis)).